Here is a 289-residue protein sequence, read N- to C-terminus: D-xylonolactone lactonase (289 aa).

Fe(2+) is bound at residue Glu-17. Positions 98, 100, 119, and 145 each coordinate D-xylono-1,5-lactone. Residues Asn-145 and Asp-195 each coordinate Fe(2+). Residue Asp-195 is the Proton donor/acceptor of the active site.

This sequence belongs to the SMP-30/CGR1 family. It depends on Fe(2+) as a cofactor.

It catalyses the reaction D-xylono-1,5-lactone + H2O = D-xylonate + H(+). Its function is as follows. Involved in the degradation of D-xylose. Catalyzes the hydrolysis of D-xylonolactone to D-xylonate. The polypeptide is D-xylonolactone lactonase (Caulobacter vibrioides (strain ATCC 19089 / CIP 103742 / CB 15) (Caulobacter crescentus)).